The chain runs to 378 residues: 3-hydroxyisobutyryl-CoA hydrolase 1 (378 aa).

Alanine 2 carries the N-acetylalanine modification. 4 residues coordinate substrate: glutamate 94, glycine 119, glutamate 142, and aspartate 150.

This sequence belongs to the enoyl-CoA hydratase/isomerase family. In terms of tissue distribution, expressed in roots, leaves, flowers and siliques.

Its subcellular location is the peroxisome. The catalysed reaction is 3-hydroxy-2-methylpropanoyl-CoA + H2O = 3-hydroxy-2-methylpropanoate + CoA + H(+). It functions in the pathway amino-acid degradation; L-valine degradation. Inhibited by copper. In terms of biological role, involved in valine catabolism. May be indirectly involved in benzoic acid biosynthesis and in cold signaling and cold tolerance. The protein is 3-hydroxyisobutyryl-CoA hydrolase 1 (CHY1) of Arabidopsis thaliana (Mouse-ear cress).